We begin with the raw amino-acid sequence, 350 residues long: Bifunctional methylenetetrahydrofolate dehydrogenase/cyclohydrolase, mitochondrial (350 aa).

The N-terminal 35 residues, Met1–Asn35, are a transit peptide targeting the mitochondrion. Lys50 carries the N6-acetyllysine; alternate modification. Lys50 participates in a covalent cross-link: Glycyl lysine isopeptide (Lys-Gly) (interchain with G-Cter in SUMO2); alternate. Substrate contacts are provided by residues Tyr84–Lys88 and Val131–Leu133. Residues Gly200–Ser202 and Arg233 each bind NAD(+). Substrate is bound at residue Pro309–Gly313.

Belongs to the tetrahydrofolate dehydrogenase/cyclohydrolase family. In terms of assembly, homodimer. The cofactor is Mg(2+).

Its subcellular location is the mitochondrion. The enzyme catalyses (6R)-5,10-methylene-5,6,7,8-tetrahydrofolate + NAD(+) = (6R)-5,10-methenyltetrahydrofolate + NADH. It carries out the reaction (6R)-5,10-methenyltetrahydrofolate + H2O = (6R)-10-formyltetrahydrofolate + H(+). Its function is as follows. Although its dehydrogenase activity is NAD-specific, it can also utilize NADP at a reduced efficiency. The protein is Bifunctional methylenetetrahydrofolate dehydrogenase/cyclohydrolase, mitochondrial (MTHFD2) of Bos taurus (Bovine).